The sequence spans 162 residues: SsrA-binding protein (162 aa).

A disordered region spans residues 140-162 (EDRRHDIKERETKREMDRAMRRR).

The protein belongs to the SmpB family.

The protein localises to the cytoplasm. Functionally, required for rescue of stalled ribosomes mediated by trans-translation. Binds to transfer-messenger RNA (tmRNA), required for stable association of tmRNA with ribosomes. tmRNA and SmpB together mimic tRNA shape, replacing the anticodon stem-loop with SmpB. tmRNA is encoded by the ssrA gene; the 2 termini fold to resemble tRNA(Ala) and it encodes a 'tag peptide', a short internal open reading frame. During trans-translation Ala-aminoacylated tmRNA acts like a tRNA, entering the A-site of stalled ribosomes, displacing the stalled mRNA. The ribosome then switches to translate the ORF on the tmRNA; the nascent peptide is terminated with the 'tag peptide' encoded by the tmRNA and targeted for degradation. The ribosome is freed to recommence translation, which seems to be the essential function of trans-translation. The sequence is that of SsrA-binding protein from Myxococcus xanthus (strain DK1622).